Reading from the N-terminus, the 187-residue chain is Plasmodium-specific hydrophobic abundant protein (187 aa).

Residues 1–18 (MMKYVFVALCLFAVVALA) form the signal peptide.

The protein to HAP-S protein.

The protein localises to the membrane. The polypeptide is Plasmodium-specific hydrophobic abundant protein (Physarum polycephalum (Slime mold)).